Consider the following 318-residue polypeptide: Ribonuclease Z (318 aa).

Zn(2+) is bound by residues His-63, His-65, Asp-67, His-68, His-142, Asp-213, and His-273. Asp-67 (proton acceptor) is an active-site residue.

The protein belongs to the RNase Z family. Homodimer. Zn(2+) is required as a cofactor.

The catalysed reaction is Endonucleolytic cleavage of RNA, removing extra 3' nucleotides from tRNA precursor, generating 3' termini of tRNAs. A 3'-hydroxy group is left at the tRNA terminus and a 5'-phosphoryl group is left at the trailer molecule.. Zinc phosphodiesterase, which displays some tRNA 3'-processing endonuclease activity. Probably involved in tRNA maturation, by removing a 3'-trailer from precursor tRNA. The sequence is that of Ribonuclease Z from Leuconostoc mesenteroides subsp. mesenteroides (strain ATCC 8293 / DSM 20343 / BCRC 11652 / CCM 1803 / JCM 6124 / NCDO 523 / NBRC 100496 / NCIMB 8023 / NCTC 12954 / NRRL B-1118 / 37Y).